The primary structure comprises 181 residues: Crossover junction endodeoxyribonuclease RuvC (181 aa).

Active-site residues include aspartate 7, glutamate 67, and aspartate 139. 3 residues coordinate Mg(2+): aspartate 7, glutamate 67, and aspartate 139.

This sequence belongs to the RuvC family. Homodimer which binds Holliday junction (HJ) DNA. The HJ becomes 2-fold symmetrical on binding to RuvC with unstacked arms; it has a different conformation from HJ DNA in complex with RuvA. In the full resolvosome a probable DNA-RuvA(4)-RuvB(12)-RuvC(2) complex forms which resolves the HJ. The cofactor is Mg(2+).

The protein localises to the cytoplasm. The catalysed reaction is Endonucleolytic cleavage at a junction such as a reciprocal single-stranded crossover between two homologous DNA duplexes (Holliday junction).. Functionally, the RuvA-RuvB-RuvC complex processes Holliday junction (HJ) DNA during genetic recombination and DNA repair. Endonuclease that resolves HJ intermediates. Cleaves cruciform DNA by making single-stranded nicks across the HJ at symmetrical positions within the homologous arms, yielding a 5'-phosphate and a 3'-hydroxyl group; requires a central core of homology in the junction. The consensus cleavage sequence is 5'-(A/T)TT(C/G)-3'. Cleavage occurs on the 3'-side of the TT dinucleotide at the point of strand exchange. HJ branch migration catalyzed by RuvA-RuvB allows RuvC to scan DNA until it finds its consensus sequence, where it cleaves and resolves the cruciform DNA. This chain is Crossover junction endodeoxyribonuclease RuvC, found in Cupriavidus taiwanensis (strain DSM 17343 / BCRC 17206 / CCUG 44338 / CIP 107171 / LMG 19424 / R1) (Ralstonia taiwanensis (strain LMG 19424)).